Here is a 248-residue protein sequence, read N- to C-terminus: Gamma-interferon-inducible lysosomal thiol reductase (248 aa).

The signal sequence occupies residues M1–T26. Positions A27–P54 are cleaved as a propeptide — removed in mature form. C69 and C72 are joined by a disulfide. Residues N92 and N105 are each glycosylated (N-linked (GlcNAc...) asparagine). Positions K231–K248 are cleaved as a propeptide — removed in mature form.

This sequence belongs to the GILT family. Dimer; disulfide-linked. N-glycosylated. Sugar chains contain mannose-6-phosphate. Post-translationally, synthesized as a 35 kDa precursor which is then processed into the mature 30 kDa form via cleavage of N-terminal and C-terminal propeptides. Processing of the precursor is mediated by multiple lysosomal proteases.

Its subcellular location is the secreted. The protein resides in the lysosome. Functionally, lysosomal thiol reductase that can reduce protein disulfide bonds. May facilitate the complete unfolding of proteins destined for lysosomal degradation. Plays an important role in antigen processing. Facilitates the generation of MHC class II-restricted epitodes from disulfide bond-containing antigen by the endocytic reduction of disulfide bonds. Also facilitates MHC class I-restricted recognition of exogenous antigens containing disulfide bonds by CD8+ T-cells or crosspresentation. The polypeptide is Gamma-interferon-inducible lysosomal thiol reductase (Ifi30) (Mus musculus (Mouse)).